Here is a 505-residue protein sequence, read N- to C-terminus: ATP synthase subunit alpha (505 aa).

170–177 (GDRQTGKS) is an ATP binding site.

Belongs to the ATPase alpha/beta chains family. F-type ATPases have 2 components, CF(1) - the catalytic core - and CF(0) - the membrane proton channel. CF(1) has five subunits: alpha(3), beta(3), gamma(1), delta(1), epsilon(1). CF(0) has four main subunits: a(1), b(1), b'(1) and c(9-12).

Its subcellular location is the cellular thylakoid membrane. It catalyses the reaction ATP + H2O + 4 H(+)(in) = ADP + phosphate + 5 H(+)(out). In terms of biological role, produces ATP from ADP in the presence of a proton gradient across the membrane. The alpha chain is a regulatory subunit. In Prochlorococcus marinus (strain AS9601), this protein is ATP synthase subunit alpha.